A 229-amino-acid chain; its full sequence is Lipoprotein-releasing system ATP-binding protein LolD (229 aa).

The region spanning 7-229 is the ABC transporter domain; that stretch reads LQCINLTKSF…KNGQLFNNKN (223 aa). Residue 43-50 coordinates ATP; the sequence is GKSGSGKS.

The protein belongs to the ABC transporter superfamily. Lipoprotein translocase (TC 3.A.1.125) family. In terms of assembly, the complex is composed of two ATP-binding proteins (LolD) and two transmembrane proteins (LolC and LolE).

It localises to the cell inner membrane. Functionally, part of the ABC transporter complex LolCDE involved in the translocation of mature outer membrane-directed lipoproteins, from the inner membrane to the periplasmic chaperone, LolA. Responsible for the formation of the LolA-lipoprotein complex in an ATP-dependent manner. This is Lipoprotein-releasing system ATP-binding protein LolD from Buchnera aphidicola subsp. Schizaphis graminum (strain Sg).